A 149-amino-acid polypeptide reads, in one-letter code: uncharacterized protein (149 aa).

Disordered stretches follow at residues 24 to 74 (TSQG…NDLE) and 129 to 149 (AIQD…PRAP). Residues 28–42 (EDVKPEPKPEVDEKV) show a composition bias toward basic and acidic residues. A coiled-coil region spans residues 102–131 (SELESLKEKVSSATSMEELREIMEEFRAIQ).

This is an uncharacterized protein from Archaeoglobus fulgidus (strain ATCC 49558 / DSM 4304 / JCM 9628 / NBRC 100126 / VC-16).